The primary structure comprises 599 residues: QHYPLGDMDGEDPMGELEIPSKSFYRQNGEPYTGKVKASVTFLDPRNISTATAAQSDLNFINDEGDTFPLRTYGMFSVDFTDEAASESLNVGKVKVHLDSTQVKMPEHVPMMKLWSLNPDTGLWEEEGDFRFESQRRKRREDRTFLVGNMEIRERRLFNLDVPESRRCFIKVRAYRSERFLPSEQIQGVVVSVINLEPRAGFSSNPRAWGRFDSVLTGPNGACLPAFCDDQSPDAYSAYVLASLAGEELEAVESSPKFNPNAIGVPQPYLNKLKYRRTDHEDPRVKKTAFQISMAKPRPNSAEESNGPIYAFENLQACEEAPPSAAHFRFYQIEGDRYDYNTVPFNEDDPMSWTEDYLAWWPKPMEFRACYIKVKIVGPLEVNVRSRNMGGTHRQTVGKLYGIRDVKSTRDRDQPNVSSACLEFKCSGMLYDQDRVDRTLVKVIPQGSCHRASVNSMLHEYLVNHLPLAVNNDTSEYTMLAPLDPLGHNYGIYTVTDQDPRTAKEIALGRCFDGSSDGSSRVMKSNVGVALTFNCVERQVGRQSAFQYLQSTSARPSPASTVRGRAPSRRQRASSGSQRQPRGVASLRFPGVAQQPLSN.

N-linked (GlcNAc...) asparagine glycans are attached at residues Asn47, Asn416, and Asn472. The span at 550–560 (QSTSARPSPAS) shows a compositional bias: polar residues. The tract at residues 550–599 (QSTSARPSPASTVRGRAPSRRQRASSGSQRQPRGVASLRFPGVAQQPLSN) is disordered. Positions 573–583 (ASSGSQRQPRG) are enriched in low complexity.

In terms of assembly, monomer. Interacts with TGFB1. Cleaved into 2 chains possibly by a furin-like protease upon or preceding secretion. Specifically expressed in cartilage. Expressed at lower level in young cartilage than in adult cartilage. In adult cartilage, it is highly expressed throughout middeep zones.

It localises to the secreted. It is found in the extracellular space. The protein localises to the extracellular matrix. Its function is as follows. Probably plays a role in cartilage scaffolding. May act by antagonizing TGF-beta1 (TGFB1) and IGF1 functions. Has the ability to suppress IGF1-induced proliferation and sulfated proteoglycan synthesis, and inhibits ligand-induced IGF1R autophosphorylation. May inhibit TGFB1-mediated induction of cartilage matrix genes via its interaction with TGFB1. Overexpression may lead to impair chondrocyte growth and matrix repair and indirectly promote inorganic pyrophosphate (PPi) supersaturation in aging and osteoarthritis cartilage. The polypeptide is Cartilage intermediate layer protein 1 (CILP) (Sus scrofa (Pig)).